The sequence spans 450 residues: tRNA-2-methylthio-N(6)-dimethylallyladenosine synthase (450 aa).

Positions 2–119 (KKVFVKTYGC…LPDLIARRQR (118 aa)) constitute an MTTase N-terminal domain. [4Fe-4S] cluster is bound by residues Cys11, Cys48, Cys82, Cys156, Cys160, and Cys163. The 234-residue stretch at 142 to 375 (RVEGPSAFVS…QATIEENVQR (234 aa)) folds into the Radical SAM core domain. Residues 378–448 (QNMVGTVQRI…PHSLRGEIVV (71 aa)) enclose the TRAM domain.

Belongs to the methylthiotransferase family. MiaB subfamily. Monomer. [4Fe-4S] cluster serves as cofactor.

It localises to the cytoplasm. The enzyme catalyses N(6)-dimethylallyladenosine(37) in tRNA + (sulfur carrier)-SH + AH2 + 2 S-adenosyl-L-methionine = 2-methylsulfanyl-N(6)-dimethylallyladenosine(37) in tRNA + (sulfur carrier)-H + 5'-deoxyadenosine + L-methionine + A + S-adenosyl-L-homocysteine + 2 H(+). Its function is as follows. Catalyzes the methylthiolation of N6-(dimethylallyl)adenosine (i(6)A), leading to the formation of 2-methylthio-N6-(dimethylallyl)adenosine (ms(2)i(6)A) at position 37 in tRNAs that read codons beginning with uridine. The protein is tRNA-2-methylthio-N(6)-dimethylallyladenosine synthase of Cupriavidus necator (strain ATCC 17699 / DSM 428 / KCTC 22496 / NCIMB 10442 / H16 / Stanier 337) (Ralstonia eutropha).